We begin with the raw amino-acid sequence, 180 residues long: Bifunctional protein PyrR (180 aa).

The PRPP-binding motif lies at 99–111 (VILVDDVLYTCRT).

Belongs to the purine/pyrimidine phosphoribosyltransferase family. PyrR subfamily. Homodimer and homohexamer; in equilibrium.

The catalysed reaction is UMP + diphosphate = 5-phospho-alpha-D-ribose 1-diphosphate + uracil. Regulates transcriptional attenuation of the pyrimidine nucleotide (pyr) operon by binding in a uridine-dependent manner to specific sites on pyr mRNA. This disrupts an antiterminator hairpin in the RNA and favors formation of a downstream transcription terminator, leading to a reduced expression of downstream genes. In terms of biological role, also displays a weak uracil phosphoribosyltransferase activity which is not physiologically significant. The protein is Bifunctional protein PyrR of Clostridium botulinum (strain Alaska E43 / Type E3).